Reading from the N-terminus, the 199-residue chain is Protein CPL1 (199 aa).

An N-terminal signal peptide occupies residues 1–30; that stretch reads MFSIPPSVRRLVFLFLIAAPLLSIVLPVAA. A disordered region spans residues 34–58; that stretch reads GVDPPSKLQPRAPQPSRRMGATKRS. N148 carries N-linked (GlcNAc...) asparagine glycosylation.

The protein resides in the secreted. Virulence factor which promotes fungal virulence by enhancing type 2 inflammation in the mouse host. Likely binds mouse Tlr4 independently of Ly96/Md2 and activates Tlr4 signaling to drive Stat3 phosphorylation in interstitial macrophages, which promotes the initial induction of Arg1/arginase-1 and increases macrophage sensitivity to Il4 signaling. This chain is Protein CPL1, found in Cryptococcus neoformans var. grubii serotype A (strain H99 / ATCC 208821 / CBS 10515 / FGSC 9487) (Filobasidiella neoformans var. grubii).